The chain runs to 49 residues: Large ribosomal subunit protein bL33B (49 aa).

The protein belongs to the bacterial ribosomal protein bL33 family.

This is Large ribosomal subunit protein bL33B from Limosilactobacillus reuteri subsp. reuteri (strain JCM 1112) (Lactobacillus reuteri).